Here is a 202-residue protein sequence, read N- to C-terminus: Helix-loop-helix protein 10 (202 aa).

2 disordered regions span residues 1-26 and 83-112; these read MESSSMTTHQEEPLDLSTGNHGNSEL and QNKSEVNDENESTPSPTQNSRRRTSTGKID. Positions 17–26 are enriched in polar residues; it reads STGNHGNSEL. A basic motif region spans residues 121–134; sequence TRRYEANARERNRV. The bHLH domain occupies 121 to 172; sequence TRRYEANARERNRVQQLSKMFDQLRVCLPIEDDAKISKLATLKVASSYIGYL. Residues 135–172 are helix-loop-helix motif; it reads QQLSKMFDQLRVCLPIEDDAKISKLATLKVASSYIGYL.

In terms of assembly, heterodimer with hlh-2. In terms of tissue distribution, expressed in intestine, neurons in head, body and tail, and in body hypodermis, and vulva. Expressed in neurons in the male-specific genital sensilla (simple sense organs) known as rays.

The protein resides in the nucleus. Its subcellular location is the cytoplasm. Probable transcription factor which binds the E box motif 5'-CA[TC][AG]TG-3'. This is Helix-loop-helix protein 10 from Caenorhabditis elegans.